The chain runs to 439 residues: Taxadien-5-alpha-ol O-acetyltransferase (439 aa).

Catalysis depends on proton acceptor residues His164 and Asp373.

This sequence belongs to the plant acyltransferase family.

The catalysed reaction is taxa-4(20),11-dien-5alpha-ol + acetyl-CoA = taxa-4(20),11-dien-5alpha-yl acetate + CoA. The protein operates within alkaloid biosynthesis; taxol biosynthesis; 10-deacetyl-2-debenzoylbaccatin III from taxa-4(20),11-dien-5alpha-ol: step 1/3. The chain is Taxadien-5-alpha-ol O-acetyltransferase (TAT) from Taxus cuspidata (Japanese yew).